A 436-amino-acid polypeptide reads, in one-letter code: Protein TolB homolog (436 aa).

Residues 1–27 (MRHSIRLTAALLLAFIACFSFPLSAMA) form the signal peptide.

This sequence belongs to the TolB family.

It is found in the periplasm. The protein is Protein TolB homolog of Chlorobium luteolum (strain DSM 273 / BCRC 81028 / 2530) (Pelodictyon luteolum).